The primary structure comprises 1047 residues: Ras GTPase-activating protein 1 (1047 aa).

Met-1 bears the N-acetylmethionine mark. In terms of domain architecture, SH2 1 spans 181–272 (WYHGKLDRTI…LKGEKLLYPV (92 aa)). An SH3 domain is found at 279-341 (EDRRRVRAIL…VEDLVEEVGR (63 aa)). The SH2 2 domain maps to 351–441 (WFHGKISKQE…VEGYYLKEPV (91 aa)). A PH domain is found at 474 to 577 (NIVKKGYLLK…WMKGLQAFCN (104 aa)). A C2 domain is found at 577–690 (NLRKSSPGTS…QKGHATDEWF (114 aa)). Tyr-615 is modified (phosphotyrosine). Residues 764–974 (KLESLLLCTL…HRMIMFLDEL (211 aa)) form the Ras-GAP domain. Ser-831 carries the phosphoserine modification.

Interacts with SQSTM1. Interacts with SPSB1; the interaction does not promote degradation. Interacts with CAV2 (tyrosine phosphorylated form). Directly interacts with NCK1. Interacts with PDGFRB (tyrosine phosphorylated). Interacts (via SH2 domain) with the 'Tyr-9' phosphorylated form of PDPK1. Interacts with tyrosine-phosphorylated EPHB4. Post-translationally, the N-terminus is blocked. Phosphorylated by SRC and LCK. The phosphorylation SRC inhibits its ability to stimulate the Ras-GTPase activity, whereas phosphorylation by LCK does not display any effect on stimulation activity. In placental villi, detected only in the trophoblast layer (cytotrophoblast and syncytiotrophoblast). Not detected in stromal, endothelial or Hofbauer cells (at protein level).

Its subcellular location is the cytoplasm. Functionally, inhibitory regulator of the Ras-cyclic AMP pathway. Stimulates the GTPase of normal but not oncogenic Ras p21; this stimulation may be further increased in the presence of NCK1. In Homo sapiens (Human), this protein is Ras GTPase-activating protein 1 (RASA1).